The following is a 24-amino-acid chain: Grammistin Pp 4b (24 aa).

As to quaternary structure, exists as aggregates of 3-4 molecules. As to expression, expressed by the skin glands.

Its subcellular location is the secreted. Functionally, thanks to its abundant amphiphilic alpha-helices, it may integrate into membrane phospholipids, leading to lysis of the membrane. Its hemolytic activity is inhibited by phospholipids, but not by cholesterol. Has antibacterial activity with a broad spectrum against various species of bacteria including both Gram-positive and Gram-negative groups. Also has ichthyotoxic activity. This is Grammistin Pp 4b from Pogonoperca punctata (Clown grouper).